Here is a 418-residue protein sequence, read N- to C-terminus: Elongation factor 1-gamma 1 (418 aa).

The region spanning 1–82 is the GST N-terminal domain; sequence MALVLHTFDG…YVTRSKSDNP (82 aa). A GST C-terminal domain is found at 87-213; it reads SLIEYAHIEQ…GDVKQADSVP (127 aa). A disordered region spans residues 211–265; that stretch reads SVPQVQKKAAAPKEQKPKEAKKEAPKEAPKPKAAEKPEEEEEAPKPKPKNPLDLL. Over residues 221–246 the composition is skewed to basic and acidic residues; that stretch reads APKEQKPKEAKKEAPKEAPKPKAAEK. Residues 258 to 418 form the EF-1-gamma C-terminal domain; sequence PKNPLDLLPP…EALLDAKCFK (161 aa).

In terms of assembly, EF-1 is composed of four subunits: alpha, beta, delta, and gamma.

Functionally, probably plays a role in anchoring the complex to other cellular components. The chain is Elongation factor 1-gamma 1 from Oryza sativa subsp. japonica (Rice).